The chain runs to 301 residues: Aspartate carbamoyltransferase catalytic subunit (301 aa).

Carbamoyl phosphate is bound by residues Arg-54 and Thr-55. Lys-82 contributes to the L-aspartate binding site. Residues Arg-104, His-132, and Gln-135 each coordinate carbamoyl phosphate. Positions 165 and 217 each coordinate L-aspartate. Positions 257 and 258 each coordinate carbamoyl phosphate.

This sequence belongs to the aspartate/ornithine carbamoyltransferase superfamily. ATCase family. Heterododecamer (2C3:3R2) of six catalytic PyrB chains organized as two trimers (C3), and six regulatory PyrI chains organized as three dimers (R2).

The catalysed reaction is carbamoyl phosphate + L-aspartate = N-carbamoyl-L-aspartate + phosphate + H(+). Its pathway is pyrimidine metabolism; UMP biosynthesis via de novo pathway; (S)-dihydroorotate from bicarbonate: step 2/3. Catalyzes the condensation of carbamoyl phosphate and aspartate to form carbamoyl aspartate and inorganic phosphate, the committed step in the de novo pyrimidine nucleotide biosynthesis pathway. In Thermus aquaticus, this protein is Aspartate carbamoyltransferase catalytic subunit.